The following is a 632-amino-acid chain: Extracellular metalloproteinase 2 (632 aa).

An N-terminal signal peptide occupies residues methionine 1–glycine 19. A propeptide spanning residues leucine 20–serine 244 is cleaved from the precursor. An N-linked (GlcNAc...) asparagine glycan is attached at asparagine 270. Residue histidine 429 participates in Zn(2+) binding. Glutamate 430 is an active-site residue. Residue histidine 433 participates in Zn(2+) binding.

This sequence belongs to the peptidase M36 family. The cofactor is Zn(2+).

Its subcellular location is the secreted. Functionally, secreted metalloproteinase probably acting as a virulence factor. The protein is Extracellular metalloproteinase 2 (MEP2) of Trichophyton tonsurans (Scalp ringworm fungus).